We begin with the raw amino-acid sequence, 871 residues long: MANEELTESQQQEDPSQQLPNADEEKGSDSDSNSDSDASSQSSGDDFYISESENEAEGDNTIFNYVRPSDIPPDPNANPETNIRRFNRVLDGKRVKRMQEEEEDKYTFYEDLFDFPRDPERWKEQDLREIWADGPLEMTKPGWDPAWADEDDWDVVNDEIQEGRDPGIQPFYVPYRKPYPAIPDNHYDIENAKGVVEELDRIEEFLQWVSYIFPDGSSYEGTVWDDLAQGKGVYIAENGLVRYEGEWLQNDMEGHGVIDVDIPDIEPIPGSKLEAKMRAEGRIIKRDYMTPEDRKWLEMDVEDSVALTDGNFQVPFYENEEWVTQFGEKPEKGRYRYAGQWKHSRMHGCGVYEVNERILYGRFYFGELLEEEHGCTVDICALHSGLAEVAAAKARMFVNKPDGMIREERGPYGDPQHPYFYEEDDVWMAPGFINQFYEVPEYWETYVGEVDQEREMWLNSFYKAPLRLPMPAELEHWWENVEVTPEFVLLNKEPEPDPNDPSKLVQKEDPVILHTPTGRIINYVEDEKHGIRLFWQPPLEEGEEVDPSKVEFLPLGFDEFYGKEVVVKKEHPIKSFVLGIEKSVKPMLDGLEKWTEEKKKAYEERKEMIQQELELVEAEICLEEAIEDMDEELKKKEQEEEKKTEMGLTEEDEDVLVPVYKEEKVVTAKEKIQENKQEEKYKDDDDEDDDDGDDDDDDDDDDDLGPSSFGSADKGRRNSPFSSSSLSFASCTLFPAVQSRLESSFLAWKQHRAEPSKVNTGIIKGADTASASIHFPPLSSNNARLKMGKVANRGCVQRSYGSSRSQSQLMSLSRLLSCNASSSSSPPDSSSSEYLKDSGLWETPVGDMSVVLSLQIQTKCSDLFAETPAVS.

A disordered region spans residues 1 to 85; that stretch reads MANEELTESQ…NANPETNIRR (85 aa). The span at 8–20 shows a compositional bias: polar residues; the sequence is ESQQQEDPSQQLP. Residues 30 to 46 are compositionally biased toward low complexity; it reads SDSNSDSDASSQSSGDD. MORN repeat units lie at residues 219 to 239, 243 to 257, and 337 to 352; these read YEGT…AENG, YEGE…GHGV, and YAGQ…CGVY. Asparagine 238 carries the post-translational modification Deamidated asparagine. A coiled-coil region spans residues 587–647; sequence MLDGLEKWTE…QEEEKKTEMG (61 aa). Disordered regions lie at residues 631–654 and 669–721; these read EELK…EDED and KEKI…NSPF. Residues 632-645 are compositionally biased toward basic and acidic residues; sequence ELKKKEQEEEKKTE. A Phosphothreonine modification is found at threonine 649. Residues 669-683 show a composition bias toward basic and acidic residues; that stretch reads KEKIQENKQEEKYKD. A compositionally biased stretch (acidic residues) spans 684 to 704; that stretch reads DDDEDDDDGDDDDDDDDDDDL.

Part of the Tic complex. Component of the 1-MD complex, composed of TIC20-I, TIC214, TIC100 and TIC56. Interacts with the translocating preproteins. Hydrolysis of ATP is essential for the formation of this complex. The 1-MD complex interacts with TIC21. Preferentially expressed in ovules, and moderately expressed in leaves and siliques.

The protein localises to the plastid. The protein resides in the chloroplast inner membrane. Involved in protein precursor import into chloroplasts. May be part of an intermediate translocation complex acting as a protein-conducting channel at the inner envelope. Plays an important role during embryogenesis and chloroplast biogenesis. In Arabidopsis thaliana (Mouse-ear cress), this protein is Protein TIC 100.